A 667-amino-acid chain; its full sequence is DNA ligase (667 aa).

NAD(+) is bound by residues 32–36, 81–82, and glutamate 110; these read DSEYD and SL. Lysine 112 serves as the catalytic N6-AMP-lysine intermediate. NAD(+) is bound by residues arginine 133, glutamate 167, lysine 283, and lysine 307. Zn(2+) contacts are provided by cysteine 401, cysteine 404, cysteine 419, and cysteine 424. The BRCT domain occupies 586–667; it reads EGHPDFKDKT…FVQKQNEIEG (82 aa).

Belongs to the NAD-dependent DNA ligase family. LigA subfamily. The cofactor is Mg(2+). It depends on Mn(2+) as a cofactor.

The enzyme catalyses NAD(+) + (deoxyribonucleotide)n-3'-hydroxyl + 5'-phospho-(deoxyribonucleotide)m = (deoxyribonucleotide)n+m + AMP + beta-nicotinamide D-nucleotide.. In terms of biological role, DNA ligase that catalyzes the formation of phosphodiester linkages between 5'-phosphoryl and 3'-hydroxyl groups in double-stranded DNA using NAD as a coenzyme and as the energy source for the reaction. It is essential for DNA replication and repair of damaged DNA. This is DNA ligase from Staphylococcus saprophyticus subsp. saprophyticus (strain ATCC 15305 / DSM 20229 / NCIMB 8711 / NCTC 7292 / S-41).